Reading from the N-terminus, the 78-residue chain is Hainantoxin-XX.2 (78 aa).

The signal sequence occupies residues 1 to 23 (MKSATLLALSYLLIALYFLICEA). Residues 24-47 (EHSRYEEHEILEENMGDVVNLEQR) constitute a propeptide that is removed on maturation. 3 disulfide bridges follow: Cys-49/Cys-62, Cys-56/Cys-66, and Cys-61/Cys-77.

The protein belongs to the hainantoxin family. 20 subfamily. Expressed by the venom gland.

It localises to the secreted. Moderately inhibits Kv1.1/KCNA1 and Kv1.2/KCNA2 and weakly inhibits Kv1.3/KCNA3, and Kv2.1/KCNB1 voltage-gated potassium channels. The protein is Hainantoxin-XX.2 of Cyriopagopus hainanus (Chinese bird spider).